Reading from the N-terminus, the 139-residue chain is Putative pre-16S rRNA nuclease (139 aa).

Belongs to the YqgF nuclease family.

Its subcellular location is the cytoplasm. Could be a nuclease involved in processing of the 5'-end of pre-16S rRNA. In Caldanaerobacter subterraneus subsp. tengcongensis (strain DSM 15242 / JCM 11007 / NBRC 100824 / MB4) (Thermoanaerobacter tengcongensis), this protein is Putative pre-16S rRNA nuclease.